A 511-amino-acid chain; its full sequence is Apolipoprotein N-acyltransferase (511 aa).

The next 6 membrane-spanning stretches (helical) occupy residues 7 to 29 (PGWP…LAPF), 58 to 78 (GWWY…VSIH), 90 to 110 (LLML…AWLW), 125 to 145 (LAFA…LTGF), 163 to 183 (VPVG…ALLV), and 192 to 212 (GASL…GLYL). The region spanning 230–470 (IQGNIAQELK…QGILRGEVIP (241 aa)) is the CN hydrolase domain. Residue Glu-269 is the Proton acceptor of the active site. Lys-330 is an active-site residue. Cys-382 functions as the Nucleophile in the catalytic mechanism. A helical transmembrane segment spans residues 482-502 (VWPLAGLAGVLLLWALLGRQL).

Belongs to the CN hydrolase family. Apolipoprotein N-acyltransferase subfamily.

The protein resides in the cell inner membrane. It catalyses the reaction N-terminal S-1,2-diacyl-sn-glyceryl-L-cysteinyl-[lipoprotein] + a glycerophospholipid = N-acyl-S-1,2-diacyl-sn-glyceryl-L-cysteinyl-[lipoprotein] + a 2-acyl-sn-glycero-3-phospholipid + H(+). Its pathway is protein modification; lipoprotein biosynthesis (N-acyl transfer). Its function is as follows. Catalyzes the phospholipid dependent N-acylation of the N-terminal cysteine of apolipoprotein, the last step in lipoprotein maturation. The sequence is that of Apolipoprotein N-acyltransferase from Pseudomonas aeruginosa (strain ATCC 15692 / DSM 22644 / CIP 104116 / JCM 14847 / LMG 12228 / 1C / PRS 101 / PAO1).